Reading from the N-terminus, the 298-residue chain is Tyrosine recombinase XerD (298 aa).

In terms of domain architecture, Core-binding (CB) spans Lys2–Tyr87. The Tyr recombinase domain maps to Arg108–Gln292. Residues Arg148, Lys172, His244, Arg247, and His270 contribute to the active site. Residue Tyr279 is the O-(3'-phospho-DNA)-tyrosine intermediate of the active site.

This sequence belongs to the 'phage' integrase family. XerD subfamily. Forms a cyclic heterotetrameric complex composed of two molecules of XerC and two molecules of XerD, in which XerC interacts with XerD via its C-terminal region, XerD interacts with XerC via its C-terminal region and so on.

The protein resides in the cytoplasm. With respect to regulation, ftsK may regulate the catalytic switch between XerC and XerD in the heterotetrameric complex during the two steps of the recombination process. Its function is as follows. Site-specific tyrosine recombinase, which acts by catalyzing the cutting and rejoining of the recombining DNA molecules. Binds cooperatively to specific DNA consensus sequences that are separated from XerC binding sites by a short central region, forming the heterotetrameric XerC-XerD complex that recombines DNA substrates. The complex is essential to convert dimers of the bacterial chromosome into monomers to permit their segregation at cell division. It also contributes to the segregational stability of plasmids. In the complex XerD specifically exchanges the bottom DNA strands. The sequence is that of Tyrosine recombinase XerD from Escherichia coli O157:H7.